Reading from the N-terminus, the 306-residue chain is tRNA dimethylallyltransferase (306 aa).

9–16 (GPTAIGKT) is a binding site for ATP. Residue 11-16 (TAIGKT) coordinates substrate. The segment at 34-37 (DSMQ) is interaction with substrate tRNA.

Belongs to the IPP transferase family. In terms of assembly, monomer. Mg(2+) is required as a cofactor.

It catalyses the reaction adenosine(37) in tRNA + dimethylallyl diphosphate = N(6)-dimethylallyladenosine(37) in tRNA + diphosphate. Catalyzes the transfer of a dimethylallyl group onto the adenine at position 37 in tRNAs that read codons beginning with uridine, leading to the formation of N6-(dimethylallyl)adenosine (i(6)A). This is tRNA dimethylallyltransferase from Lactobacillus helveticus (strain DPC 4571).